The chain runs to 211 residues: Ribosomal RNA small subunit methyltransferase G (211 aa).

Residues Gly-81, Leu-86, 132-133 (VE), and Arg-147 contribute to the S-adenosyl-L-methionine site.

Belongs to the methyltransferase superfamily. RNA methyltransferase RsmG family.

Its subcellular location is the cytoplasm. The catalysed reaction is guanosine(527) in 16S rRNA + S-adenosyl-L-methionine = N(7)-methylguanosine(527) in 16S rRNA + S-adenosyl-L-homocysteine. Specifically methylates the N7 position of guanine in position 527 of 16S rRNA. This chain is Ribosomal RNA small subunit methyltransferase G, found in Actinobacillus succinogenes (strain ATCC 55618 / DSM 22257 / CCUG 43843 / 130Z).